Here is a 108-residue protein sequence, read N- to C-terminus: Nucleoid-associated protein BPP1222 (108 aa).

The disordered stretch occupies residues 86–108; that stretch reads TSQEKMASVTAGMPLPPGMKLPF. A compositionally biased stretch (pro residues) spans 99-108; that stretch reads PLPPGMKLPF.

Belongs to the YbaB/EbfC family. As to quaternary structure, homodimer.

It localises to the cytoplasm. Its subcellular location is the nucleoid. Its function is as follows. Binds to DNA and alters its conformation. May be involved in regulation of gene expression, nucleoid organization and DNA protection. This is Nucleoid-associated protein BPP1222 from Bordetella parapertussis (strain 12822 / ATCC BAA-587 / NCTC 13253).